The primary structure comprises 101 residues: NAD(P)H-quinone oxidoreductase subunit 4L, chloroplastic (101 aa).

3 helical membrane-spanning segments follow: residues I2–I22, M32–I52, and I64–I84.

Belongs to the complex I subunit 4L family. As to quaternary structure, NDH is composed of at least 16 different subunits, 5 of which are encoded in the nucleus.

It is found in the plastid. The protein resides in the chloroplast thylakoid membrane. The catalysed reaction is a plastoquinone + NADH + (n+1) H(+)(in) = a plastoquinol + NAD(+) + n H(+)(out). It catalyses the reaction a plastoquinone + NADPH + (n+1) H(+)(in) = a plastoquinol + NADP(+) + n H(+)(out). In terms of biological role, NDH shuttles electrons from NAD(P)H:plastoquinone, via FMN and iron-sulfur (Fe-S) centers, to quinones in the photosynthetic chain and possibly in a chloroplast respiratory chain. The immediate electron acceptor for the enzyme in this species is believed to be plastoquinone. Couples the redox reaction to proton translocation, and thus conserves the redox energy in a proton gradient. In Chlorokybus atmophyticus (Soil alga), this protein is NAD(P)H-quinone oxidoreductase subunit 4L, chloroplastic.